We begin with the raw amino-acid sequence, 452 residues long: Coiled-coil domain-containing protein 71 (452 aa).

The interval 81-106 is disordered; it reads PSQTKLQARAPTPAATSPPASAPQTA. Over residues 87-106 the composition is skewed to low complexity; sequence QARAPTPAATSPPASAPQTA. Serine 129 is subject to Phosphoserine. 2 disordered regions span residues 209-256 and 322-404; these read PLKV…GLQS and AREV…LGPG. Residues 279 to 344 are a coiled coil; that stretch reads KAAQAKAACA…QAKAKVARTQ (66 aa). Positions 332-344 are enriched in low complexity; it reads KAVQAKAKVARTQ. Basic and acidic residues predominate over residues 377–386; the sequence is RTEEAKDLSP.

The polypeptide is Coiled-coil domain-containing protein 71 (CCDC71) (Bos taurus (Bovine)).